Consider the following 319-residue polypeptide: tRNA dimethylallyltransferase (319 aa).

Residue 16–23 (GPTASGKS) participates in ATP binding. 18 to 23 (TASGKS) contributes to the substrate binding site. Residues 46-49 (DSMV) are interaction with substrate tRNA.

This sequence belongs to the IPP transferase family. In terms of assembly, monomer. Mg(2+) serves as cofactor.

The catalysed reaction is adenosine(37) in tRNA + dimethylallyl diphosphate = N(6)-dimethylallyladenosine(37) in tRNA + diphosphate. Functionally, catalyzes the transfer of a dimethylallyl group onto the adenine at position 37 in tRNAs that read codons beginning with uridine, leading to the formation of N6-(dimethylallyl)adenosine (i(6)A). This Cutibacterium acnes (strain DSM 16379 / KPA171202) (Propionibacterium acnes) protein is tRNA dimethylallyltransferase.